Here is a 353-residue protein sequence, read N- to C-terminus: Nicotinate-nucleotide--dimethylbenzimidazole phosphoribosyltransferase (353 aa).

The active-site Proton acceptor is the E319.

This sequence belongs to the CobT family.

It carries out the reaction 5,6-dimethylbenzimidazole + nicotinate beta-D-ribonucleotide = alpha-ribazole 5'-phosphate + nicotinate + H(+). Its pathway is nucleoside biosynthesis; alpha-ribazole biosynthesis; alpha-ribazole from 5,6-dimethylbenzimidazole: step 1/2. Catalyzes the synthesis of alpha-ribazole-5'-phosphate from nicotinate mononucleotide (NAMN) and 5,6-dimethylbenzimidazole (DMB). This Chlorobaculum tepidum (strain ATCC 49652 / DSM 12025 / NBRC 103806 / TLS) (Chlorobium tepidum) protein is Nicotinate-nucleotide--dimethylbenzimidazole phosphoribosyltransferase.